A 140-amino-acid polypeptide reads, in one-letter code: Holo-[acyl-carrier-protein] synthase (140 aa).

D8 and E62 together coordinate Mg(2+).

The protein belongs to the P-Pant transferase superfamily. AcpS family. Requires Mg(2+) as cofactor.

The protein localises to the cytoplasm. It carries out the reaction apo-[ACP] + CoA = holo-[ACP] + adenosine 3',5'-bisphosphate + H(+). In terms of biological role, transfers the 4'-phosphopantetheine moiety from coenzyme A to a Ser of acyl-carrier-protein. The sequence is that of Holo-[acyl-carrier-protein] synthase from Cupriavidus pinatubonensis (strain JMP 134 / LMG 1197) (Cupriavidus necator (strain JMP 134)).